We begin with the raw amino-acid sequence, 281 residues long: 16S rRNA (guanine(1405)-N(7))-methyltransferase (281 aa).

S-adenosyl-L-methionine is bound by residues Tyr60, 105–107 (HTS), Arg111, Gly136, Asp160, 186–187 (QG), Phe203, and Gln212.

It belongs to the methyltransferase superfamily. Aminoglycoside resistance family.

It carries out the reaction guanosine(1405) in 16S rRNA + S-adenosyl-L-methionine = N(7)-methylguanosine(1405) in 16S rRNA + S-adenosyl-L-homocysteine. In terms of biological role, specifically methylates the N(7) position of guanine 1405 in 16S rRNA. Confers resistance to various aminoglycosides, including gentamicin and kanamycin. The polypeptide is 16S rRNA (guanine(1405)-N(7))-methyltransferase (rmtC) (Proteus mirabilis).